The chain runs to 350 residues: Biotin synthase (350 aa).

The 228-residue stretch at 41–268 folds into the Radical SAM core domain; it reads NEVQISRLLS…KSRVRLSAGR (228 aa). Residues cysteine 56, cysteine 60, and cysteine 63 each contribute to the [4Fe-4S] cluster site. [2Fe-2S] cluster is bound by residues cysteine 100, cysteine 131, cysteine 191, and arginine 263.

Belongs to the radical SAM superfamily. Biotin synthase family. As to quaternary structure, homodimer. [4Fe-4S] cluster serves as cofactor. Requires [2Fe-2S] cluster as cofactor.

The catalysed reaction is (4R,5S)-dethiobiotin + (sulfur carrier)-SH + 2 reduced [2Fe-2S]-[ferredoxin] + 2 S-adenosyl-L-methionine = (sulfur carrier)-H + biotin + 2 5'-deoxyadenosine + 2 L-methionine + 2 oxidized [2Fe-2S]-[ferredoxin]. It participates in cofactor biosynthesis; biotin biosynthesis; biotin from 7,8-diaminononanoate: step 2/2. In terms of biological role, catalyzes the conversion of dethiobiotin (DTB) to biotin by the insertion of a sulfur atom into dethiobiotin via a radical-based mechanism. This Shewanella frigidimarina (strain NCIMB 400) protein is Biotin synthase.